Reading from the N-terminus, the 194-residue chain is 7-methyl-GTP pyrophosphatase (194 aa).

The active-site Proton acceptor is D69.

It belongs to the Maf family. YceF subfamily. Requires a divalent metal cation as cofactor.

It localises to the cytoplasm. The catalysed reaction is N(7)-methyl-GTP + H2O = N(7)-methyl-GMP + diphosphate + H(+). In terms of biological role, nucleoside triphosphate pyrophosphatase that hydrolyzes 7-methyl-GTP (m(7)GTP). May have a dual role in cell division arrest and in preventing the incorporation of modified nucleotides into cellular nucleic acids. This is 7-methyl-GTP pyrophosphatase (yceF) from Shigella flexneri.